A 278-amino-acid polypeptide reads, in one-letter code: Potassium/proton antiporter CemA (278 aa).

4 consecutive transmembrane segments (helical) span residues 60–80 (YLVL…SLVF), 163–183 (ILAF…IAVL), 201–221 (FLII…GWEV), and 239–259 (IFLF…YWIF).

This sequence belongs to the CemA family.

It localises to the plastid. It is found in the chloroplast inner membrane. The catalysed reaction is K(+)(in) + H(+)(out) = K(+)(out) + H(+)(in). In terms of biological role, contributes to K(+)/H(+) antiport activity by supporting proton efflux to control proton extrusion and homeostasis in chloroplasts in a light-dependent manner to modulate photosynthesis. Prevents excessive induction of non-photochemical quenching (NPQ) under continuous-light conditions. Indirectly promotes efficient inorganic carbon uptake into chloroplasts. The sequence is that of Potassium/proton antiporter CemA from Guillardia theta (Cryptophyte).